A 267-amino-acid polypeptide reads, in one-letter code: Ubiquinone biosynthesis protein COQ4, mitochondrial (267 aa).

A mitochondrion-targeting transit peptide spans 1–17; that stretch reads MSRLKIPSQLLRGGRGF. Zn(2+) is bound by residues H153, D154, H157, and E169.

The protein belongs to the COQ4 family. Component of a multi-subunit COQ enzyme complex, composed of at least COQ3, COQ4, COQ5, COQ6, COQ7 and COQ9. It depends on Zn(2+) as a cofactor.

The protein localises to the mitochondrion inner membrane. The catalysed reaction is a 4-hydroxy-3-methoxy-5-(all-trans-polyprenyl)benzoate + H(+) = a 2-methoxy-6-(all-trans-polyprenyl)phenol + CO2. The protein operates within cofactor biosynthesis; ubiquinone biosynthesis. Its function is as follows. Lyase that catalyzes the C1-decarboxylation of 4-hydroxy-3-methoxy-5-(all-trans-polyprenyl)benzoic acid into 2-methoxy-6-(all-trans-polyprenyl)phenol during ubiquinone biosynthesis. The chain is Ubiquinone biosynthesis protein COQ4, mitochondrial from Arthroderma otae (strain ATCC MYA-4605 / CBS 113480) (Microsporum canis).